Here is a 251-residue protein sequence, read N- to C-terminus: Gamma-interferon-inducible lysosomal thiol reductase (251 aa).

A signal peptide spans M1 to C21. The Saposin A-type domain occupies M22–V60. An intrachain disulfide couples C68 to C71. N108 carries an N-linked (GlcNAc...) asparagine glycan.

The protein belongs to the GILT family. As to quaternary structure, dimer; disulfide-linked. As to expression, highly expressed in spleen and kidney. Also detected at lower levels in liver, heart, brain, intestine and gill.

The protein localises to the secreted. It localises to the lysosome. In terms of biological role, lysosomal thiol reductase that can reduce protein disulfide bonds. May facilitate the complete unfolding of proteins destined for lysosomal degradation. Plays an important role in antigen processing. This Carassius auratus (Goldfish) protein is Gamma-interferon-inducible lysosomal thiol reductase.